Here is a 735-residue protein sequence, read N- to C-terminus: Ion-translocating oxidoreductase complex subunit C (735 aa).

4Fe-4S ferredoxin-type domains follow at residues 368–397 (MGAP…QQLY) and 407–436 (KATA…VQYF). 8 residues coordinate [4Fe-4S] cluster: C377, C380, C383, C387, C416, C419, C422, and C426. Positions 562 to 713 (AIARAKARKQ…AEPADPRKAA (152 aa)) are disordered.

It belongs to the 4Fe4S bacterial-type ferredoxin family. RnfC subfamily. In terms of assembly, the complex is composed of six subunits: RsxA, RsxB, RsxC, RsxD, RsxE and RsxG. [4Fe-4S] cluster is required as a cofactor.

Its subcellular location is the cell inner membrane. In terms of biological role, part of a membrane-bound complex that couples electron transfer with translocation of ions across the membrane. Required to maintain the reduced state of SoxR. This is Ion-translocating oxidoreductase complex subunit C from Salmonella newport (strain SL254).